The following is a 298-amino-acid chain: Protease HtpX homolog (298 aa).

The next 2 helical transmembrane spans lie at Tyr15–Phe35 and Ala39–Ala59. His143 serves as a coordination point for Zn(2+). The active site involves Glu144. His147 is a binding site for Zn(2+). The next 2 membrane-spanning stretches (helical) occupy residues Ile158–Trp178 and Ile197–Ala217. Glu226 provides a ligand contact to Zn(2+).

This sequence belongs to the peptidase M48B family. The cofactor is Zn(2+).

The protein resides in the cell membrane. In Pediococcus pentosaceus (strain ATCC 25745 / CCUG 21536 / LMG 10740 / 183-1w), this protein is Protease HtpX homolog.